The chain runs to 95 residues: Envelope glycoprotein N (95 aa).

An N-terminal signal peptide occupies residues 1-26; sequence MGLMDIHNAVCSLVIGVAILIATSQA. The Virion surface segment spans residues 27-55; sequence TFVDWGSSITSMGDFWESTCSAVGVSIAF. Residues 56–76 form a helical membrane-spanning segment; that stretch reads SSGFSVLFYMGLVAVISALLA. Residues 77-95 are Intravirion-facing; sequence GSYHACFRLFTADMFKEEW.

Belongs to the herpesviridae glycoprotein N family. Interacts (via N-terminus) with gM (via N-terminus). The gM-gN heterodimer forms the gCII complex.

It is found in the virion membrane. The protein localises to the host membrane. It localises to the host Golgi apparatus. The protein resides in the host trans-Golgi network. Its function is as follows. Envelope glycoprotein necessary for proper maturation of gM and modulation of its membrane fusion activity. Also plays a critical role in virion morphogenesis. The sequence is that of Envelope glycoprotein N from Gallus gallus (Chicken).